The primary structure comprises 289 residues: Alpha-soluble NSF attachment protein (289 aa).

One copy of the TPR repeat lies at 112-145 (GKYYKEIAELYELEQNFEQAIIYFEKAADIYQSE).

The protein belongs to the SNAP family.

It is found in the membrane. In terms of biological role, required for vesicular transport between the endoplasmic reticulum and the Golgi apparatus. The chain is Alpha-soluble NSF attachment protein from Vitis vinifera (Grape).